The primary structure comprises 395 residues: Chalcone synthase (395 aa).

V2 is modified (N-acetylvaline). N-acetylalanine is present on V2. C169 is an active-site residue.

The protein belongs to the thiolase-like superfamily. Chalcone/stilbene synthases family.

It catalyses the reaction (E)-4-coumaroyl-CoA + 3 malonyl-CoA + 3 H(+) = 2',4,4',6'-tetrahydroxychalcone + 3 CO2 + 4 CoA. It functions in the pathway secondary metabolite biosynthesis; flavonoid biosynthesis. Functionally, the primary product of this enzyme is 4,2',4',6'-tetrahydroxychalcone (also termed naringenin-chalcone or chalcone) which can under specific conditions spontaneously isomerize into naringenin. This Arabidopsis thaliana (Mouse-ear cress) protein is Chalcone synthase (CHS).